Consider the following 657-residue polypeptide: Threonine--tRNA ligase (657 aa).

Positions 1–62 (MALDITFPDG…AHSGQLQIMT (62 aa)) constitute a TGS domain. The catalytic stretch occupies residues 240-538 (DHRVIGRDLD…LTEIYKGAFP (299 aa)). Zn(2+)-binding residues include Cys-334, His-385, and His-515.

The protein belongs to the class-II aminoacyl-tRNA synthetase family. In terms of assembly, homodimer. Zn(2+) is required as a cofactor.

The protein localises to the cytoplasm. It carries out the reaction tRNA(Thr) + L-threonine + ATP = L-threonyl-tRNA(Thr) + AMP + diphosphate + H(+). Catalyzes the attachment of threonine to tRNA(Thr) in a two-step reaction: L-threonine is first activated by ATP to form Thr-AMP and then transferred to the acceptor end of tRNA(Thr). Also edits incorrectly charged L-seryl-tRNA(Thr). The sequence is that of Threonine--tRNA ligase from Lacticaseibacillus paracasei (strain ATCC 334 / BCRC 17002 / CCUG 31169 / CIP 107868 / KCTC 3260 / NRRL B-441) (Lactobacillus paracasei).